A 351-amino-acid polypeptide reads, in one-letter code: Thiamine-phosphate synthase (351 aa).

A unknown region spans residues 1 to 128; it reads MLNSNTKDHE…SKIASEIRYE (128 aa). Positions 129–351 are thiamine-phosphate synthase; the sequence is IYTVEIDLLS…MILKELSHEN (223 aa). Residues 180–184 and N212 each bind 4-amino-2-methyl-5-(diphosphooxymethyl)pyrimidine; that span reads QHRFK. Positions 213 and 232 each coordinate Mg(2+). S251 contacts 4-amino-2-methyl-5-(diphosphooxymethyl)pyrimidine. 277–279 contacts 2-[(2R,5Z)-2-carboxy-4-methylthiazol-5(2H)-ylidene]ethyl phosphate; the sequence is TTT. K280 is a 4-amino-2-methyl-5-(diphosphooxymethyl)pyrimidine binding site. G307 provides a ligand contact to 2-[(2R,5Z)-2-carboxy-4-methylthiazol-5(2H)-ylidene]ethyl phosphate.

It belongs to the thiamine-phosphate synthase family. It depends on Mg(2+) as a cofactor.

It catalyses the reaction 2-[(2R,5Z)-2-carboxy-4-methylthiazol-5(2H)-ylidene]ethyl phosphate + 4-amino-2-methyl-5-(diphosphooxymethyl)pyrimidine + 2 H(+) = thiamine phosphate + CO2 + diphosphate. The enzyme catalyses 2-(2-carboxy-4-methylthiazol-5-yl)ethyl phosphate + 4-amino-2-methyl-5-(diphosphooxymethyl)pyrimidine + 2 H(+) = thiamine phosphate + CO2 + diphosphate. The catalysed reaction is 4-methyl-5-(2-phosphooxyethyl)-thiazole + 4-amino-2-methyl-5-(diphosphooxymethyl)pyrimidine + H(+) = thiamine phosphate + diphosphate. It functions in the pathway cofactor biosynthesis; thiamine diphosphate biosynthesis; thiamine phosphate from 4-amino-2-methyl-5-diphosphomethylpyrimidine and 4-methyl-5-(2-phosphoethyl)-thiazole: step 1/1. Its function is as follows. Condenses 4-methyl-5-(beta-hydroxyethyl)thiazole monophosphate (THZ-P) and 2-methyl-4-amino-5-hydroxymethyl pyrimidine pyrophosphate (HMP-PP) to form thiamine monophosphate (TMP). The polypeptide is Thiamine-phosphate synthase (Prochlorococcus marinus (strain AS9601)).